The primary structure comprises 310 residues: Homoserine kinase (310 aa).

Proline 91 to cysteine 101 provides a ligand contact to ATP.

Belongs to the GHMP kinase family. Homoserine kinase subfamily.

The protein localises to the cytoplasm. It catalyses the reaction L-homoserine + ATP = O-phospho-L-homoserine + ADP + H(+). Its pathway is amino-acid biosynthesis; L-threonine biosynthesis; L-threonine from L-aspartate: step 4/5. In terms of biological role, catalyzes the ATP-dependent phosphorylation of L-homoserine to L-homoserine phosphate. This Escherichia coli (strain K12 / MC4100 / BW2952) protein is Homoserine kinase.